A 670-amino-acid chain; its full sequence is Oxidoreductase PigB (670 aa).

The first 19 residues, 1 to 19, serve as a signal peptide directing secretion; that stretch reads MIIQRLFGILYMLAGLAKA. 4 consecutive transmembrane segments (helical) span residues 53-73, 76-96, 98-118, and 238-258; these read GDVI…ILML, LWTT…VVIL, QSQP…LYML, and LVFF…VGFI.

The protein belongs to the flavin monoamine oxidase family. Requires FAD as cofactor.

The protein localises to the membrane. The protein operates within antibiotic biosynthesis; prodigiosin biosynthesis. Involved in the biosynthesis of 2-methyl-3-n-amyl-pyrrole (MAP), one of the terminal products involved in the biosynthesis of the red antibiotic prodigiosin (Pig). Catalyzes the oxidation of dihydro form of MAP (H2MAP) to yield MAP. The protein is Oxidoreductase PigB of Serratia sp. (strain ATCC 39006) (Prodigiosinella confusarubida).